A 1166-amino-acid chain; its full sequence is Poly [ADP-ribose] polymerase tankyrase-2 (1166 aa).

4 ANK repeats span residues 23–52 (PSAR…VNSR), 57–86 (RKST…NVQA), 90–119 (GGLI…DPNA), and 123–152 (WNYT…EPTI). At asparagine 203 the chain carries (3S)-3-hydroxyasparagine; by HIF1AN. ANK repeat units lie at residues 210–239 (RKST…DVHA), 243–272 (GDLV…CVNA), 276–305 (WQFT…DPTL), 363–395 (THET…NTNE), 399–428 (EFLT…KVNA), 432–461 (LGQT…DPNI), and 463–489 (SLQG…SLGH). At histidine 238 the chain carries (3S)-3-hydroxyhistidine; by HIF1AN. At asparagine 271 the chain carries (3S)-3-hydroxyasparagine; by HIF1AN. At asparagine 427 the chain carries (3S)-3-hydroxyasparagine; by HIF1AN. Asparagine 518 is modified ((3S)-3-hydroxyasparagine; by HIF1AN). 4 ANK repeats span residues 525 to 554 (RQST…DVHA), 558 to 587 (GGLV…VVNV), 591 to 620 (WKFT…DPTK), and 624 to 652 (DGNT…LLDA). Residues 545–553 (LLQHGADVH) form an HIF1AN-binding region. At histidine 553 the chain carries (3S)-3-hydroxyhistidine; by HIF1AN. The residue at position 586 (asparagine 586) is a (3S)-3-hydroxyasparagine; by HIF1AN. 3 positions are modified to (3S)-3-hydroxyasparagine; by HIF1AN: asparagine 671, asparagine 706, and asparagine 739. ANK repeat units follow at residues 678–707 (RHST…DVNA), 711–740 (GGLI…CVNA), and 744–773 (WAFT…DPTL). Residues 873–936 (GIDFSITQFI…IKGVERLISG (64 aa)) enclose the SAM domain. One can recognise a PARP catalytic domain in the interval 959–1164 (SPDDKEFQSV…YQIVRPEGMV (206 aa)). Zn(2+) contacts are provided by cysteine 1081, histidine 1084, cysteine 1089, and cysteine 1092.

It belongs to the ARTD/PARP family. Oligomerizes and associates with TNKS. Interacts with the cytoplasmic domain of LNPEP/Otase in SLC2A4/GLUT4-vesicles. Binds to the N-terminus of Grb14 and TRF1 with its ankyrin repeat region. Interacts with HIF1AN. Interacts with RNF146; this interaction leads to ubiquitination and proteasomal degradation. Interacts with NUMA1. In terms of processing, ubiquitinated by RNF146 when auto-poly-ADP-ribosylated, leading to its degradation. Deubiquitinated by USP25; leading to stabilization. Post-translationally, ADP-ribosylated (-auto). Poly-ADP-ribosylated protein is recognized by RNF146, followed by ubiquitination.

It is found in the cytoplasm. Its subcellular location is the golgi apparatus membrane. The protein localises to the nucleus. It localises to the chromosome. The protein resides in the telomere. The enzyme catalyses NAD(+) + (ADP-D-ribosyl)n-acceptor = nicotinamide + (ADP-D-ribosyl)n+1-acceptor + H(+).. It catalyses the reaction L-aspartyl-[protein] + NAD(+) = 4-O-(ADP-D-ribosyl)-L-aspartyl-[protein] + nicotinamide. The catalysed reaction is L-glutamyl-[protein] + NAD(+) = 5-O-(ADP-D-ribosyl)-L-glutamyl-[protein] + nicotinamide. Poly-ADP-ribosyltransferase involved in various processes such as Wnt signaling pathway, telomere length and vesicle trafficking. Acts as an activator of the Wnt signaling pathway by mediating poly-ADP-ribosylation of AXIN1 and AXIN2, 2 key components of the beta-catenin destruction complex: poly-ADP-ribosylated target proteins are recognized by RNF146, which mediates their ubiquitination and subsequent degradation. Also mediates poly-ADP-ribosylation of BLZF1 and CASC3, followed by recruitment of RNF146 and subsequent ubiquitination. Mediates poly-ADP-ribosylation of TERF1, thereby contributing to the regulation of telomere length. Stimulates 26S proteasome activity. The polypeptide is Poly [ADP-ribose] polymerase tankyrase-2 (Mus musculus (Mouse)).